Here is a 398-residue protein sequence, read N- to C-terminus: Alpha-monoglucosyldiacylglycerol synthase (398 aa).

Belongs to the glycosyltransferase group 1 family. Glycosyltransferase 4 subfamily. Mg(2+) is required as a cofactor.

It is found in the cell membrane. The catalysed reaction is a 1,2-diacyl-sn-glycerol + UDP-alpha-D-glucose = a 1,2-diacyl-3-O-(alpha-D-glucopyranosyl)-sn-glycerol + UDP + H(+). Activated by the negatively charged lipids phosphatidylglycerol (PG), cardiolipin (CL), dodecylphosphate-rac-glycerol (PDG), 1,2-dioleoyl-phosphatidylglycerol (DOPG) and phosphatidylserine (PS). Glucosyltransferase involved in the biosynthesis of the non-bilayer-prone membrane lipid alpha-monoglucosyldiacylglycerol. This is a major component for maintaining a certain anionic lipid surface charge density, for balancing the bilayer to non-bilayer phase equilibria and for keeping a constant lipid bilayer spontaneous curvature (curvature packing stress). Catalyzes the transfer of a glucosyl residue from UDP-Glc to diacylglycerol (DAG) acceptor to form the corresponding alpha-glucosyl-DAG (1,2-diacyl-3-O-(alpha-D-glucopyranosyl)-sn-glycerol). It can only use UDP-Glc as sugar donor and DAG is the preferred substrate. The protein is Alpha-monoglucosyldiacylglycerol synthase (mgs) of Acholeplasma laidlawii.